Reading from the N-terminus, the 88-residue chain is UPF0297 protein GK2555 (88 aa).

The protein belongs to the UPF0297 family.

The chain is UPF0297 protein GK2555 from Geobacillus kaustophilus (strain HTA426).